Consider the following 353-residue polypeptide: Spermidine/putrescine import ATP-binding protein PotA (353 aa).

The region spanning 7–237 is the ABC transporter domain; it reads IRFERVTKEY…PINRFVADFI (231 aa). ATP is bound at residue 39 to 46; the sequence is GPSGCGKT.

Belongs to the ABC transporter superfamily. Spermidine/putrescine importer (TC 3.A.1.11.1) family. In terms of assembly, the complex is composed of two ATP-binding proteins (PotA), two transmembrane proteins (PotB and PotC) and a solute-binding protein (PotD).

It localises to the cell membrane. The enzyme catalyses ATP + H2O + polyamine-[polyamine-binding protein]Side 1 = ADP + phosphate + polyamineSide 2 + [polyamine-binding protein]Side 1.. Functionally, part of the ABC transporter complex PotABCD involved in spermidine/putrescine import. Responsible for energy coupling to the transport system. The sequence is that of Spermidine/putrescine import ATP-binding protein PotA from Geobacillus kaustophilus (strain HTA426).